Reading from the N-terminus, the 225-residue chain is uncharacterized protein (225 aa).

This is an uncharacterized protein from Methanocaldococcus jannaschii (strain ATCC 43067 / DSM 2661 / JAL-1 / JCM 10045 / NBRC 100440) (Methanococcus jannaschii).